We begin with the raw amino-acid sequence, 294 residues long: Endolytic peptidoglycan transglycosylase RlpA (294 aa).

Residues 1-23 (MKQKIFQILTALCCIFYVMSAQA) form the signal peptide. The SPOR domain maps to 216–291 (EKYTTVYKIR…NYSKPLIVYT (76 aa)).

It belongs to the RlpA family.

Its function is as follows. Lytic transglycosylase with a strong preference for naked glycan strands that lack stem peptides. In Pasteurella multocida (strain Pm70), this protein is Endolytic peptidoglycan transglycosylase RlpA.